Reading from the N-terminus, the 342-residue chain is Isopentenyl-diphosphate delta-isomerase (342 aa).

11–12 serves as a coordination point for substrate; that stretch reads RK. Residues serine 68, 69 to 71, serine 99, and asparagine 128 contribute to the FMN site; that span reads SMT. 99-101 is a substrate binding site; the sequence is SQR. A substrate-binding site is contributed by glutamine 162. Glutamate 163 is a Mg(2+) binding site. Residues lysine 194, serine 219, threonine 224, 275-277, and 296-297 contribute to the FMN site; these read GVR and AK.

It belongs to the IPP isomerase type 2 family. Homooctamer. Dimer of tetramers. FMN serves as cofactor. NADPH is required as a cofactor. Requires Mg(2+) as cofactor.

The protein localises to the cytoplasm. The catalysed reaction is isopentenyl diphosphate = dimethylallyl diphosphate. Involved in the biosynthesis of isoprenoids. Catalyzes the 1,3-allylic rearrangement of the homoallylic substrate isopentenyl (IPP) to its allylic isomer, dimethylallyl diphosphate (DMAPP). This Legionella pneumophila (strain Lens) protein is Isopentenyl-diphosphate delta-isomerase.